Reading from the N-terminus, the 426-residue chain is Delta-aminolevulinic acid dehydratase, chloroplastic (426 aa).

The N-terminal 45 residues, 1–45, are a transit peptide targeting the chloroplast; the sequence is MASTVSFSPANVQMLQGRSCHGHAAFGGCSAVPRTGPRMRSVAVR. Residues 74–107 form a disordered region; that stretch reads GRFPAPPPLVRPKAPEGTPQIRPLDLTKRPRRNR. The active-site Schiff-base intermediate with substrate is Lys293. The 5-aminolevulinate site is built by Arg303 and Lys315. Glu331 lines the Mg(2+) pocket. Lys346 acts as the Schiff-base intermediate with substrate in catalysis. 2 residues coordinate 5-aminolevulinate: Ser372 and Tyr411.

It belongs to the ALAD family. In terms of assembly, homooctamer. Requires Mg(2+) as cofactor.

The protein localises to the plastid. Its subcellular location is the chloroplast. The enzyme catalyses 2 5-aminolevulinate = porphobilinogen + 2 H2O + H(+). The protein operates within porphyrin-containing compound metabolism; protoporphyrin-IX biosynthesis; coproporphyrinogen-III from 5-aminolevulinate: step 1/4. Its function is as follows. Catalyzes an early step in the biosynthesis of tetrapyrroles. Binds two molecules of 5-aminolevulinate per subunit, each at a distinct site, and catalyzes their condensation to form porphobilinogen. This chain is Delta-aminolevulinic acid dehydratase, chloroplastic (HEMB), found in Oryza sativa subsp. japonica (Rice).